Consider the following 880-residue polypeptide: Alanine--tRNA ligase (880 aa).

Positions 566, 570, 668, and 672 each coordinate Zn(2+).

It belongs to the class-II aminoacyl-tRNA synthetase family. Zn(2+) serves as cofactor.

It localises to the cytoplasm. The catalysed reaction is tRNA(Ala) + L-alanine + ATP = L-alanyl-tRNA(Ala) + AMP + diphosphate. Catalyzes the attachment of alanine to tRNA(Ala) in a two-step reaction: alanine is first activated by ATP to form Ala-AMP and then transferred to the acceptor end of tRNA(Ala). Also edits incorrectly charged Ser-tRNA(Ala) and Gly-tRNA(Ala) via its editing domain. The chain is Alanine--tRNA ligase from Acetivibrio thermocellus (strain ATCC 27405 / DSM 1237 / JCM 9322 / NBRC 103400 / NCIMB 10682 / NRRL B-4536 / VPI 7372) (Clostridium thermocellum).